Reading from the N-terminus, the 305-residue chain is Protein FdhE homolog (305 aa).

It belongs to the FdhE family.

The protein resides in the cytoplasm. In terms of biological role, necessary for formate dehydrogenase activity. The protein is Protein FdhE homolog of Haemophilus ducreyi (strain 35000HP / ATCC 700724).